The chain runs to 119 residues: Large ribosomal subunit protein bL20 (119 aa).

This sequence belongs to the bacterial ribosomal protein bL20 family.

Functionally, binds directly to 23S ribosomal RNA and is necessary for the in vitro assembly process of the 50S ribosomal subunit. It is not involved in the protein synthesizing functions of that subunit. The protein is Large ribosomal subunit protein bL20 of Erythrobacter litoralis (strain HTCC2594).